We begin with the raw amino-acid sequence, 306 residues long: Ribosomal RNA small subunit methyltransferase H (306 aa).

S-adenosyl-L-methionine is bound by residues 33 to 35 (GGY), Asp51, Phe78, Asp96, and Gln103.

Belongs to the methyltransferase superfamily. RsmH family.

It localises to the cytoplasm. The catalysed reaction is cytidine(1402) in 16S rRNA + S-adenosyl-L-methionine = N(4)-methylcytidine(1402) in 16S rRNA + S-adenosyl-L-homocysteine + H(+). Its function is as follows. Specifically methylates the N4 position of cytidine in position 1402 (C1402) of 16S rRNA. The protein is Ribosomal RNA small subunit methyltransferase H of Rickettsia prowazekii (strain Madrid E).